The chain runs to 515 residues: Signal transduction histidine-protein kinase/phosphatase MprB (515 aa).

At 1–24 the chain is on the cytoplasmic side; sequence MTLPPQPSRLKPPRNTSSLSLRWR. The helical transmembrane segment at 25–45 threads the bilayer; the sequence is VMLLAMSMVAMVVVLMSVAVY. The Extracellular portion of the chain corresponds to 46–165; that stretch reads AVVSRALYDD…TGQVLGRLGT (120 aa). The chain crosses the membrane as a helical span at residues 166 to 186; it reads VLLIVGGVGVAVAAIAGGMVA. In terms of domain architecture, HAMP spans 187–239; that stretch reads RAGLRPVGRLTQAAERVARTDDLRPIPVFGSDELARLTEAFNMMLRALTESRE. Residues 187–515 are Cytoplasmic-facing; it reads RAGLRPVGRL…GKSRSASKEL (329 aa). The 221-residue stretch at 247–467 folds into the Histidine kinase domain; sequence DAGHELRTPL…SFYVMLPGRP (221 aa). His-250 carries the post-translational modification Phosphohistidine; by autocatalysis. The interval 468 to 515 is disordered; the sequence is LTPGGNGTAPVPAAQFDPDMRSAGSRADRRVIKNTETNGKSRSASKEL.

It depends on Mg(2+) as a cofactor. Requires Mn(2+) as cofactor. Post-translationally, autophosphorylated.

It localises to the cell membrane. It catalyses the reaction ATP + protein L-histidine = ADP + protein N-phospho-L-histidine.. Its function is as follows. Member of the two-component regulatory system MprB/MprA which contributes to maintaining a balance among several systems involved in stress resistance and is required for establishment and maintenance of persistent infection in the host. In response to environmental signals MprB acts both as a membrane-associated protein kinase that undergoes autophosphorylation and subsequently transfers the phosphate to MprA, and a protein phosphatase that dephosphorylates phospho-MprA. The polypeptide is Signal transduction histidine-protein kinase/phosphatase MprB (mprB) (Mycobacterium sp. (strain JLS)).